The following is a 156-amino-acid chain: CRIB domain-containing protein RIC11 (156 aa).

Positions 26–39 (IGHPTEVKHVAHIG) constitute a CRIB domain. Residues 87–156 (QDQLNISDRI…SMVSRLNSNA (70 aa)) form a disordered region. A compositionally biased stretch (basic residues) spans 109 to 120 (IHTKSKNRRKKP). Over residues 121-142 (SSTSSPRSRPSPKSSRSMGLSK) the composition is skewed to low complexity.

Its function is as follows. Functions as a downstream effector of Rho-related GTP binding proteins of the 'Rho of Plants' (ROPs) family. Participates in the propagation of ROP GTPase signals in specific cellular responses. This is CRIB domain-containing protein RIC11 (RIC11) from Arabidopsis thaliana (Mouse-ear cress).